Consider the following 369-residue polypeptide: Type 2 DNA topoisomerase 6 subunit A (369 aa).

Residues 10-146 (KPREIAKQKI…LGFIPEEDGS (137 aa)) enclose the Topo IIA-type catalytic domain. Tyr-103 (O-(5'-phospho-DNA)-tyrosine intermediate) is an active-site residue. The Mg(2+) site is built by Glu-197 and Asp-249.

This sequence belongs to the TOP6A family. Homodimer. Heterotetramer of two Top6A and two Top6B chains. Mg(2+) serves as cofactor.

The catalysed reaction is ATP-dependent breakage, passage and rejoining of double-stranded DNA.. Its function is as follows. Relaxes both positive and negative superturns and exhibits a strong decatenase activity. This Methanocaldococcus jannaschii (strain ATCC 43067 / DSM 2661 / JAL-1 / JCM 10045 / NBRC 100440) (Methanococcus jannaschii) protein is Type 2 DNA topoisomerase 6 subunit A.